The chain runs to 1053 residues: Prestalk protein (1053 aa).

The signal sequence occupies residues 1–18 (MNKIYLILILFTFVGIIL). One copy of the X-1 repeat lies at 38–60 (NKCTLDKCNNGCCSNTPININDN). The tract at residues 38–1019 (NKCTLDKCNN…VHTPVDCNDN (982 aa)) is 41 X 24 AA tandem repeats, Cys-rich. The X-2 repeat unit spans residues 61–84 (DECTVDTCNPKTGISHTPVNCDDG). One copy of the X-3 repeat lies at 85–108 (NSCTADSCLCGKGCQHVPIACDDN). One copy of the A-1 repeat lies at 109–132 (NACTVDSCSNSTGCCHTPLSCDDN). The A-2 repeat unit spans residues 133–156 (NPCTVDSCSNSTGCCHTPINVDDH). The stretch at 157–180 (NACTEDKCTQSGGVTHTPIACDDK) is one B-1 repeat. One copy of the A-3 repeat lies at 181 to 204 (NACTVDSCSNSTGCCHTPLSCDDN). The stretch at 205–228 (NACTVDSCSNSTGCVHTPINVDDH) is one A-4 repeat. A B-2 repeat occupies 229 to 252 (NACTEDKCTQSGGVTHTPIACDDK). Residues 253-276 (NACTADSCSNSTGCCHTPITCDDN) form an A-5 repeat. One copy of the A-6 repeat lies at 277–300 (NACTVDSCSNSTGCCHTPINVDDN). The stretch at 301 to 324 (NACTEDKCTQSGGVTHTPIACDDK) is one B-3 repeat. One copy of the A-7 repeat lies at 325–348 (NACTVDSCSNSTGCVHTPLACDDK). Residues 349 to 372 (NPCTVDSCSNSTGCCHTPINVDDN) form an A-8 repeat. The stretch at 373–396 (NACTEDKCTQSGGVTHTPINCDDN) is one B-4 repeat. Residues 397 to 420 (NKCTVDSCSNSTGCCHTPMSCDDN) form an A-9 repeat. An A-10 repeat occupies 421–444 (NPCTVDSCSNSTGCVHTPINVDDN). One copy of the B-5 repeat lies at 445–468 (NACTEDKCTQNGGVTHTPIACDDK). One copy of the A-11 repeat lies at 469–492 (NACTVDSCSNSTGCCHTPLKCDDN). The A-12 repeat unit spans residues 493–516 (NACTVDSCSNSTGCVHTPINVDDN). One copy of the B-6 repeat lies at 517-540 (NACTEDKCTQSGGVTHTPISCDDK). The stretch at 541 to 564 (NPCTIDSCSNSTGCVHTPMSCDDR) is one A-13 repeat. The stretch at 565–588 (NPCTSDFCSWEKGCQHVALSCNDF) is one X-4 repeat. The stretch at 589-612 (NACTMDSCSNSTGCTHTPIACDDK) is one A-14 repeat. An A-15 repeat occupies 613–636 (NACTVDSCSNSTGCVHTPLTCDDN). The stretch at 637–660 (NPCTVDSCSNSTGCCHTPINVDDH) is one A-16 repeat. A B-7 repeat occupies 661-684 (NACTEDKCTQSGGVTHTPIACDDK). Residues 685 to 708 (NACTVDSCSNSTGCCHTPLSCDDN) form an A-17 repeat. The stretch at 709–732 (NACTVDSCSNSTGCVHTPINVDDN) is one A-18 repeat. The stretch at 733–756 (NACTEDKCTQNGGVTHTPIACDDK) is one B-8 repeat. Residues 757–780 (NACTVDSCSNSTGCCHTPLKCDDN) form an A-19 repeat. An A-20 repeat occupies 781–804 (NPCTVDSCSNSTGCVHTPMNVDDN). Residues 805-828 (NACTEDKCTQNGGVTHTPIRCDDL) form a B-9 repeat. Residues 829-852 (NSCTADSCSNSTGCVHTPINCDDN) form an A-21 repeat. Residues 853-876 (NKCTADSCSNSTGCCHTPISCDDN) form an A-22 repeat. The stretch at 877–900 (NPCTVDSCSNSTGCCHTPINVDDN) is one A-23 repeat. Residues 901-924 (NPCTEDKCTQSGGVTHTPIGCNDN) form a B-10 repeat. Residues 925 to 948 (NACTVDSCSNSTGCTHTPMKCDDN) form an A-24 repeat. Residues 949-971 (NPCTIDSCSNSTGCVHTPMNCDD) form an A-25 repeat. The A-26 repeat unit spans residues 972–995 (GNFCTLDSCCSTGCTHTPIIIDDN). One copy of the A-27 repeat lies at 996 to 1019 (NPCTVDSCCNSTGVVHTPVDCNDN).

It is found in the secreted. The protein resides in the extracellular space. Its subcellular location is the extracellular matrix. Functionally, component of the stalk tube, the matrix that encases stalk cells. The chain is Prestalk protein (ecmB) from Dictyostelium discoideum (Social amoeba).